The primary structure comprises 340 residues: Phenylalanine--tRNA ligase alpha subunit (340 aa).

Glutamate 258 lines the Mg(2+) pocket.

This sequence belongs to the class-II aminoacyl-tRNA synthetase family. Phe-tRNA synthetase alpha subunit type 1 subfamily. As to quaternary structure, tetramer of two alpha and two beta subunits. Mg(2+) is required as a cofactor.

Its subcellular location is the cytoplasm. The catalysed reaction is tRNA(Phe) + L-phenylalanine + ATP = L-phenylalanyl-tRNA(Phe) + AMP + diphosphate + H(+). The protein is Phenylalanine--tRNA ligase alpha subunit of Corynebacterium efficiens (strain DSM 44549 / YS-314 / AJ 12310 / JCM 11189 / NBRC 100395).